The following is a 177-amino-acid chain: MVVIVISGPPGGGKTTQARRVAEYFSLRYYSAGMIFREIARSRGLSLEELSIIAANDPSIDIEIDKRTYEEALKGNVVLDGHLTAWIVSNIADIKIYVTAPLHIRIKRIAERDNIDLNKAMHETIIREYVQKKRFMEYYGIDIDDLSIFDLVINTEKLSVEKTFNIIREFIEKFLKE.

8–16 (GPPGGGKTT) contributes to the ATP binding site.

The protein belongs to the cytidylate kinase family. Type 2 subfamily.

The protein resides in the cytoplasm. The enzyme catalyses CMP + ATP = CDP + ADP. It carries out the reaction dCMP + ATP = dCDP + ADP. The sequence is that of Cytidylate kinase from Staphylothermus marinus (strain ATCC 43588 / DSM 3639 / JCM 9404 / F1).